We begin with the raw amino-acid sequence, 848 residues long: MSGFQTSDEVDISNSLKAFPVDIATDNQKDKHENVGENVSDEDDGNYIASKLLESNRRTKGKKGNGKASNFQSMGLNQTLLRAIFKKGFKAPTPIQRKTIPLLLEGRDVVGMARTGSGKTAAFVIPMIEHLKSTLANSNTRALILSPNRELALQTVKVVKDFSKGTDLRSVAIVGGVSLEEQFSLLSGKPDIVVATPGRFLHLKVEMKLELSSIEYVVFDEADRLFEMGFAAQLTEILHALPTSRQTLLFSATLPRTLVDFAKAGLQDPVLVRLDVESKVSADLQSAFFSVKTAEREAALLCILQDIIKLPLKDNVRPREIGNVNNPKKRKRALELALKGSESGSPDSTLVFVPTKHHVEYVSELLVQAGYSVSKIYGSLDQEARLNEINNFRLGKTNLLVVTDVASRGIDIPLLANVINYDFPPQPKVFVHRVGRTARAGRTGWAYSLVRAEDAGYLLDLQLFLNRPLVTSSKQVKTDSDCDFTKQIVLGSLPQELVAELLEWVQRIVSRDVELQQLSNVAARGEKLYFRTRATCSAESAKRAKELVDSKGWSSNNPLFGDVSVIEAEEKYAELLSKVSSYRPSETVFEIGQRGHLKTEAAEIMRKRRNKVKPKGIKSEVASDKITDSSPGNMSEASESELEEVFKNPKELSKKKTTDFKDKEYYMSHYAPKESIQETGYAINSGENFTTAARHAILDLTNDEGIEQSRKGGQRWDPKKKKFVNIINDEDGSKGSPKIIRGESGVKLPATYRSGRFDEWKASKAFGANDSPIRENKRYKHNKLQTPKPADKFRDNYHKQNKRNREAKERGIGIKVNSELKSAVEIRKARELKEKRLAKNNRPSKKHR.

Residues 22–43 form a disordered region; it reads DIATDNQKDKHENVGENVSDED. The short motif at 69–97 is the Q motif element; sequence SNFQSMGLNQTLLRAIFKKGFKAPTPIQR. The Helicase ATP-binding domain occupies 100-272; sequence IPLLLEGRDV…KAGLQDPVLV (173 aa). 113 to 120 provides a ligand contact to ATP; sequence ARTGSGKT. A DEAD box motif is present at residues 220–223; that stretch reads DEAD. Residues 330–480 enclose the Helicase C-terminal domain; it reads RKRALELALK…TSSKQVKTDS (151 aa). The segment at 610–650 is disordered; the sequence is NKVKPKGIKSEVASDKITDSSPGNMSEASESELEEVFKNPK. Basic and acidic residues predominate over residues 617-627; that stretch reads IKSEVASDKIT. Polar residues predominate over residues 628-637; that stretch reads DSSPGNMSEA. 3 positions are modified to phosphoserine: S638, S733, and S736. The disordered stretch occupies residues 768-813; the sequence is ANDSPIRENKRYKHNKLQTPKPADKFRDNYHKQNKRNREAKERGIG. Basic and acidic residues predominate over residues 789 to 812; sequence PADKFRDNYHKQNKRNREAKERGI.

The protein belongs to the DEAD box helicase family. DDX54/DBP10 subfamily.

It is found in the nucleus. It localises to the nucleolus. The catalysed reaction is ATP + H2O = ADP + phosphate + H(+). Its function is as follows. ATP-binding RNA helicase involved in the biogenesis of 60S ribosomal subunits and is required for the normal formation of 25S and 5.8S rRNAs. In Schizosaccharomyces pombe (strain 972 / ATCC 24843) (Fission yeast), this protein is ATP-dependent RNA helicase dbp10 (dbp10).